Reading from the N-terminus, the 1121-residue chain is MPMGRFLSLVRGDSAESPREITSQSNIIGDTGSNGWLIRFFDSAFFCEWIAVSYLYKHPHAGVRDYLCNRMYTLPLSGIESYLFQICYMMVHKPSPSLDKFVIDICGKSLKIALKVHWFLLAELEDADDNEGISRIQEKCQIAATLMGEWSPLMRPQNEVSTPGSKNQVLNRLLSSKQKLFSLKLSPPTQKSLSFSPSPGTNVQDDGSQLPAEDNKIFKKLIPSPKVRDALMFRKSADKDDEESEKEGFFKRLLRDSKGEGDEPIPNSEGFFKRLLKDNKSEDEDITNSSEGFFKRLLSSKGESEELTSSSDGLFKRLLRDNKGDEEELGANSDSFFKRLLRESKNEDEESNPNSEGFFKKLFRDSKPEDDKVPKEVDDEDKDGFLKKLFREKNDDKRHGSEKNEANGTVYADKKSGEEDEREGFFKKFFKEKSDDKKDIVKVDDGNESEGDESPEFSLFKRLFRIHPEDAKPTSENENSSNGLVESSPGTENFFRKLFRDRDQSVEDSELFGSKKHKEKRPGSPKQRDDTPSGKPPLPNNTASQFRKGAYHESLEFVQALCETSYGLVDIFPIEDRKIGLRESLAEINFHLSEAEITGGICFPMGRGVFRVVHIPEDECILLNSREKAPYMISVEVLKAETPSAKESSNSQKLSKGGIPLANGDAFLQKPPPWAYPLWTTQEVYRNSADRMSLSTAQAIDQAMTPKSEVKVKLVNVSLSVEDRTSALESFGDPIDDVLGEAPRTGLNNDLEWVRVVVTADPGLRMESIPDPSVPRKKEHRRVPSTVAMEEVRAAAAKGEAPPGLPLKGAGQDSSDAQPRANGGMLKEGDALSGELWEGKRDRIRKASIYGKLPGWDLRSIIVKSGDDCRQEHLAVQLISHFYDIFQEAGLPLWLRPYEVLVTSSYTALIETIPDTASIHSIKSRYPNITSLRDFFVAKYKENSPSFKLAQRNFVESMAGYSLVCYLLQVKDRHNGNLLLDEEGHIIHIDFGFMLSNSPGGVNFESAPFKLTRELLEVMDSDADGVPSEFFDYFKVLCIQGFLTCRKHAERIILLVEMLQDSGFPCFKGGPRTIQNLRKRFHLSLTEEQCVSLVLSLISSSLDAWRTRQYDYYQRVLNGIL.

One can recognise a PIK helical domain in the interval 1–143; it reads MPMGRFLSLV…SRIQEKCQIA (143 aa). Positions 187 to 207 are enriched in polar residues; that stretch reads PPTQKSLSFSPSPGTNVQDDG. Residues 187-210 are disordered; sequence PPTQKSLSFSPSPGTNVQDDGSQL. 9 consecutive repeat copies span residues 212–231, 244–263, 266–285, 288–306, 309–328, 331–350, 353–372, 380–398, and 420–438. The tract at residues 212 to 508 is 11 X 20 AA approximate repeats (PPC); that stretch reads AEDNKIFKKL…FRDRDQSVED (297 aa). Disordered stretches follow at residues 343 to 421, 435 to 489, 506 to 544, and 794 to 825; these read ESKN…EEDE, DDKK…ESSP, VEDSELFGSKKHKEKRPGSPKQRDDTPSGKPPLPNNTAS, and AAAAKGEAPPGLPLKGAGQDSSDAQPRANGGM. Basic and acidic residues-rich tracts occupy residues 358–376, 383–405, 412–421, and 435–445; these read FFKKLFRDSKPEDDKVPKE, DGFLKKLFREKNDDKRHGSEKNE, ADKKSGEEDE, and DDKKDIVKVDD. Acidic residues predominate over residues 446–455; sequence GNESEGDESP. Residues serine 449 and serine 454 each carry the phosphoserine modification. A run of 2 repeats spans residues 454-472 and 489-508. Positions 466–475 are enriched in basic and acidic residues; it reads IHPEDAKPTS. A compositionally biased stretch (polar residues) spans 476 to 489; it reads ENENSSNGLVESSP. A PI3K/PI4K catalytic domain is found at 835–1106; the sequence is ELWEGKRDRI…LISSSLDAWR (272 aa). Positions 841–847 are G-loop; the sequence is RDRIRKA. The interval 969–977 is catalytic loop; it reads QVKDRHNGN. Residues 988–1012 are activation loop; sequence HIDFGFMLSNSPGGVNFESAPFKLT.

Belongs to the PI3/PI4-kinase family. Type III PI4K subfamily. Interacts with AHK2, CBL1 and RABA4D. As to expression, expressed constitutively in leaves, roots, flowers, and stems.

The protein resides in the cell membrane. It is found in the golgi apparatus. It localises to the trans-Golgi network. The protein localises to the cytoplasmic vesicle membrane. The catalysed reaction is a 1,2-diacyl-sn-glycero-3-phospho-(1D-myo-inositol) + ATP = a 1,2-diacyl-sn-glycero-3-phospho-(1D-myo-inositol 4-phosphate) + ADP + H(+). Its activity is regulated as follows. Stimulated by phosphatidylinositol 4-phosphate (PtdIns4P). Slightly repressed by phosphatidyl-choline (PtdCho), wortmannin and adenosine. Its function is as follows. Acts on phosphatidylinositol (PtdIns) in the first committed step in the production of the second messenger inositol-1,4,5-trisphosphate. Necessary for proper organization of the trans-Golgi network (TGN) and post-Golgi secretion in root hairs. Together with PI4KB2, required during polarized root hair expansion and pollen tube elongation. Functions redundantly with PI4KB2 upstream of the cold response phosphoinositide-dependent phospholipase C (PI-PLC) pathway. The protein is Phosphatidylinositol 4-kinase beta 1 of Arabidopsis thaliana (Mouse-ear cress).